Consider the following 666-residue polypeptide: Transketolase (666 aa).

H26 serves as a coordination point for substrate. Residues H66 and 114 to 116 (GPL) contribute to the thiamine diphosphate site. A Mg(2+)-binding site is contributed by D155. Positions 156 and 185 each coordinate thiamine diphosphate. N185 and I187 together coordinate Mg(2+). Positions 261, 358, and 385 each coordinate substrate. Residue H261 coordinates thiamine diphosphate. Catalysis depends on E411, which acts as the Proton donor. Residue F437 participates in thiamine diphosphate binding. Residues H461, D469, and R520 each coordinate substrate.

It belongs to the transketolase family. Homodimer. Mg(2+) is required as a cofactor. It depends on Ca(2+) as a cofactor. Requires Mn(2+) as cofactor. The cofactor is Co(2+). Thiamine diphosphate serves as cofactor.

It catalyses the reaction D-sedoheptulose 7-phosphate + D-glyceraldehyde 3-phosphate = aldehydo-D-ribose 5-phosphate + D-xylulose 5-phosphate. Its function is as follows. Catalyzes the transfer of a two-carbon ketol group from a ketose donor to an aldose acceptor, via a covalent intermediate with the cofactor thiamine pyrophosphate. The protein is Transketolase (tkt) of Buchnera aphidicola subsp. Baizongia pistaciae (strain Bp).